Reading from the N-terminus, the 30-residue chain is Photosystem II reaction center protein Psb30 (30 aa).

The Lumenal portion of the chain corresponds to 1 to 6 (EVIAQL). A helical membrane pass occupies residues 7 to 21 (TMIAMIGIAGPMIIF). Over 22–30 (LLAVRRGNL) the chain is Cytoplasmic.

The protein belongs to the Psb30/Ycf12 family. PSII is composed of 1 copy each of membrane proteins PsbA, PsbB, PsbC, PsbD, PsbE, PsbF, PsbH, PsbI, PsbJ, PsbK, PsbL, PsbM, PsbT, PsbX, PsbY, PsbZ, Psb30/Ycf12, peripheral proteins PsbO, CyanoQ (PsbQ), PsbU, PsbV and a large number of cofactors. It forms dimeric complexes. It depends on PSII binds multiple chlorophylls, carotenoids and specific lipids. as a cofactor.

It is found in the cellular thylakoid membrane. Its function is as follows. A core subunit of photosystem II (PSII), probably helps stabilize the reaction center. PSII is a light-driven water plastoquinone oxidoreductase, using light energy to abstract electrons from H(2)O, generating a proton gradient subsequently used for ATP formation. The polypeptide is Photosystem II reaction center protein Psb30 (Thermostichus vulcanus (Synechococcus vulcanus)).